A 135-amino-acid polypeptide reads, in one-letter code: ATP synthase epsilon chain (135 aa).

It belongs to the ATPase epsilon chain family. F-type ATPases have 2 components, CF(1) - the catalytic core - and CF(0) - the membrane proton channel. CF(1) has five subunits: alpha(3), beta(3), gamma(1), delta(1), epsilon(1). CF(0) has three main subunits: a, b and c.

Its subcellular location is the cell inner membrane. Produces ATP from ADP in the presence of a proton gradient across the membrane. The polypeptide is ATP synthase epsilon chain (Brucella anthropi (strain ATCC 49188 / DSM 6882 / CCUG 24695 / JCM 21032 / LMG 3331 / NBRC 15819 / NCTC 12168 / Alc 37) (Ochrobactrum anthropi)).